The chain runs to 471 residues: Tryptophanase (471 aa).

3 positions are modified to N6-acetyllysine: Lys-5, Lys-115, and Lys-156. Lys-270 is modified (N6-(pyridoxal phosphate)lysine). Lys-450 is subject to N6-acetyllysine.

This sequence belongs to the beta-eliminating lyase family. In terms of assembly, homotetramer. Requires pyridoxal 5'-phosphate as cofactor.

It carries out the reaction L-tryptophan + H2O = indole + pyruvate + NH4(+). It functions in the pathway amino-acid degradation; L-tryptophan degradation via pyruvate pathway; indole and pyruvate from L-tryptophan: step 1/1. The polypeptide is Tryptophanase (tnaA) (Escherichia coli O157:H7).